Consider the following 328-residue polypeptide: Delta-aminolevulinic acid dehydratase (328 aa).

Lys-200 functions as the Schiff-base intermediate with substrate in the catalytic mechanism. Residues Arg-210 and Lys-222 each coordinate 5-aminolevulinate. Glu-238 is a binding site for Mg(2+). Lys-253 acts as the Schiff-base intermediate with substrate in catalysis. 2 residues coordinate 5-aminolevulinate: Ser-279 and Tyr-318.

The protein belongs to the ALAD family. As to quaternary structure, homooctamer.

It catalyses the reaction 2 5-aminolevulinate = porphobilinogen + 2 H2O + H(+). Its pathway is porphyrin-containing compound metabolism; protoporphyrin-IX biosynthesis; coproporphyrinogen-III from 5-aminolevulinate: step 1/4. With respect to regulation, stimulated by magnesium, inhibited by zinc. Its function is as follows. Catalyzes an early step in the biosynthesis of tetrapyrroles. Binds two molecules of 5-aminolevulinate per subunit, each at a distinct site, and catalyzes their condensation to form porphobilinogen. The protein is Delta-aminolevulinic acid dehydratase (hemB) of Chlorobaculum parvum (strain DSM 263 / NCIMB 8327) (Chlorobium vibrioforme subsp. thiosulfatophilum).